Consider the following 172-residue polypeptide: Adenine phosphoribosyltransferase (172 aa).

Belongs to the purine/pyrimidine phosphoribosyltransferase family. In terms of assembly, homodimer.

It is found in the cytoplasm. It catalyses the reaction AMP + diphosphate = 5-phospho-alpha-D-ribose 1-diphosphate + adenine. The protein operates within purine metabolism; AMP biosynthesis via salvage pathway; AMP from adenine: step 1/1. Functionally, catalyzes a salvage reaction resulting in the formation of AMP, that is energically less costly than de novo synthesis. This chain is Adenine phosphoribosyltransferase, found in Clostridium acetobutylicum (strain ATCC 824 / DSM 792 / JCM 1419 / IAM 19013 / LMG 5710 / NBRC 13948 / NRRL B-527 / VKM B-1787 / 2291 / W).